The primary structure comprises 245 residues: 1-(5-phosphoribosyl)-5-[(5-phosphoribosylamino)methylideneamino] imidazole-4-carboxamide isomerase (245 aa).

Catalysis depends on aspartate 8, which acts as the Proton acceptor. Aspartate 129 functions as the Proton donor in the catalytic mechanism.

Belongs to the HisA/HisF family.

It localises to the cytoplasm. The catalysed reaction is 1-(5-phospho-beta-D-ribosyl)-5-[(5-phospho-beta-D-ribosylamino)methylideneamino]imidazole-4-carboxamide = 5-[(5-phospho-1-deoxy-D-ribulos-1-ylimino)methylamino]-1-(5-phospho-beta-D-ribosyl)imidazole-4-carboxamide. The protein operates within amino-acid biosynthesis; L-histidine biosynthesis; L-histidine from 5-phospho-alpha-D-ribose 1-diphosphate: step 4/9. The protein is 1-(5-phosphoribosyl)-5-[(5-phosphoribosylamino)methylideneamino] imidazole-4-carboxamide isomerase of Rhodopseudomonas palustris (strain HaA2).